The chain runs to 299 residues: Ribonuclease H2 subunit A (299 aa).

Met1 carries the N-acetylmethionine modification. The region spanning Pro28–Glu250 is the RNase H type-2 domain. Residues Asp34, Glu35, and Asp141 each coordinate a divalent metal cation. A phosphothreonine mark is found at Thr204 and Thr216. Residues Ser257 and Ser277 each carry the phosphoserine modification.

The protein belongs to the RNase HII family. Eukaryotic subfamily. In terms of assembly, the RNase H2 complex is a heterotrimer composed of the catalytic subunit RNASEH2A and the non-catalytic subunits RNASEH2B and RNASEH2C. Requires Mn(2+) as cofactor. Mg(2+) serves as cofactor.

It localises to the nucleus. It carries out the reaction Endonucleolytic cleavage to 5'-phosphomonoester.. Functionally, catalytic subunit of RNase HII, an endonuclease that specifically degrades the RNA of RNA:DNA hybrids. Participates in DNA replication, possibly by mediating the removal of lagging-strand Okazaki fragment RNA primers during DNA replication. Mediates the excision of single ribonucleotides from DNA:RNA duplexes. The sequence is that of Ribonuclease H2 subunit A (RNASEH2A) from Homo sapiens (Human).